The primary structure comprises 267 residues: Methylglyoxal reductase DkgB (267 aa).

Catalysis depends on Y39, which acts as the Proton donor. H97 lines the substrate pocket. Residue 179–231 (MTLAYGKALKDEVIARIAVKHNATPVQVILAWAMGEGYSVIPSSTRRENLASN) coordinates NADP(+).

The protein belongs to the aldo/keto reductase family. In terms of assembly, monomer.

It localises to the cytoplasm. The enzyme catalyses hydroxyacetone + NADP(+) = methylglyoxal + NADPH + H(+). In terms of biological role, aldo-keto reductase that significantly contributes to cellular methylglyoxal detoxification by catalyzing the NADPH-dependent conversion of methylglyoxal to acetol. The sequence is that of Methylglyoxal reductase DkgB from Salmonella typhi.